A 404-amino-acid chain; its full sequence is Cysteine desulfurase IscS (404 aa).

Pyridoxal 5'-phosphate contacts are provided by residues 75–76 (AT), Asn-155, Gln-183, and 203–205 (SAH). Lys-206 bears the N6-(pyridoxal phosphate)lysine mark. Thr-243 contributes to the pyridoxal 5'-phosphate binding site. The active-site Cysteine persulfide intermediate is the Cys-328. Residue Cys-328 coordinates [2Fe-2S] cluster.

The protein belongs to the class-V pyridoxal-phosphate-dependent aminotransferase family. NifS/IscS subfamily. In terms of assembly, homodimer. Forms a heterotetramer with IscU, interacts with other sulfur acceptors. Pyridoxal 5'-phosphate serves as cofactor.

Its subcellular location is the cytoplasm. It carries out the reaction (sulfur carrier)-H + L-cysteine = (sulfur carrier)-SH + L-alanine. The protein operates within cofactor biosynthesis; iron-sulfur cluster biosynthesis. In terms of biological role, master enzyme that delivers sulfur to a number of partners involved in Fe-S cluster assembly, tRNA modification or cofactor biosynthesis. Catalyzes the removal of elemental sulfur atoms from cysteine to produce alanine. Functions as a sulfur delivery protein for Fe-S cluster synthesis onto IscU, an Fe-S scaffold assembly protein, as well as other S acceptor proteins. The protein is Cysteine desulfurase IscS of Vibrio cholerae serotype O1 (strain ATCC 39541 / Classical Ogawa 395 / O395).